Here is a 267-residue protein sequence, read N- to C-terminus: Proteasome assembly chaperone 2 (267 aa).

Belongs to the PSMG2 family. In terms of assembly, component of the 20S proteasome chaperone. Forms a heterodimer with PBA1 that binds to proteasome precursors.

Its subcellular location is the cytoplasm. In terms of biological role, involved in 20S proteasome assembly. Required for maximal proteasome activity. Affects the chymotrypsin-like activity of the proteasome. Can be degraded by the proteasome. Involved in the endoplasmic reticulum-associated degradation (ERAD). The polypeptide is Proteasome assembly chaperone 2 (ADD66) (Saccharomyces cerevisiae (strain ATCC 204508 / S288c) (Baker's yeast)).